The sequence spans 130 residues: Large ribosomal subunit protein bL12 (130 aa).

Belongs to the bacterial ribosomal protein bL12 family. Homodimer. Part of the ribosomal stalk of the 50S ribosomal subunit. Forms a multimeric L10(L12)X complex, where L10 forms an elongated spine to which 2 to 4 L12 dimers bind in a sequential fashion. Binds GTP-bound translation factors.

Functionally, forms part of the ribosomal stalk which helps the ribosome interact with GTP-bound translation factors. Is thus essential for accurate translation. The sequence is that of Large ribosomal subunit protein bL12 from Synechococcus sp. (strain RCC307).